Consider the following 218-residue polypeptide: Ubiquitin-conjugating enzyme E2-24 kDa (218 aa).

Residues 3 to 148 (SSKRRIETDV…IKEYIDKYAT (146 aa)) enclose the UBC core domain. The active-site Glycyl thioester intermediate is Cys-85. The disordered stretch occupies residues 154–218 (QMFGGDNDSD…DDDYDEVANQ (65 aa)). 2 stretches are compositionally biased toward acidic residues: residues 160 to 183 (NDSD…EDMD) and 192 to 218 (DSVD…VANQ).

It belongs to the ubiquitin-conjugating enzyme family.

It is found in the cytoplasm. It catalyses the reaction S-ubiquitinyl-[E1 ubiquitin-activating enzyme]-L-cysteine + [E2 ubiquitin-conjugating enzyme]-L-cysteine = [E1 ubiquitin-activating enzyme]-L-cysteine + S-ubiquitinyl-[E2 ubiquitin-conjugating enzyme]-L-cysteine.. It participates in protein modification; protein ubiquitination. Functionally, catalyzes the covalent attachment of ubiquitin to other proteins. Required for the adaptation to the presence of glucose in the growth medium; mediates the degradation of enzymes involved in gluconeogenesis when cells are shifted to glucose-containing medium. Required for proteasome-dependent catabolite degradation of fructose-1,6-bisphosphatase (FBP1). In Saccharomyces cerevisiae (strain ATCC 204508 / S288c) (Baker's yeast), this protein is Ubiquitin-conjugating enzyme E2-24 kDa (UBC8).